The chain runs to 443 residues: Dihydroorotase (443 aa).

Zn(2+)-binding residues include histidine 80 and histidine 82. Substrate contacts are provided by residues 82 to 84 (HFR) and asparagine 114. Zn(2+)-binding residues include aspartate 170, histidine 197, and histidine 251. Asparagine 297 provides a ligand contact to substrate. Aspartate 324 contacts Zn(2+). Aspartate 324 is a catalytic residue. Residues histidine 328 and 342–343 (FG) contribute to the substrate site.

It belongs to the metallo-dependent hydrolases superfamily. DHOase family. Class I DHOase subfamily. It depends on Zn(2+) as a cofactor.

It catalyses the reaction (S)-dihydroorotate + H2O = N-carbamoyl-L-aspartate + H(+). Its pathway is pyrimidine metabolism; UMP biosynthesis via de novo pathway; (S)-dihydroorotate from bicarbonate: step 3/3. In terms of biological role, catalyzes the reversible cyclization of carbamoyl aspartate to dihydroorotate. The sequence is that of Dihydroorotase from Wolbachia sp. subsp. Brugia malayi (strain TRS).